A 428-amino-acid chain; its full sequence is Peptidase B (428 aa).

Mn(2+)-binding residues include lysine 195 and aspartate 200. Lysine 207 is a catalytic residue. Mn(2+) contacts are provided by aspartate 218, aspartate 277, and glutamate 279. Arginine 281 is a catalytic residue.

The protein belongs to the peptidase M17 family. Homohexamer. Requires Mn(2+) as cofactor.

The protein localises to the cytoplasm. It carries out the reaction Release of an N-terminal amino acid, Xaa, from a peptide or arylamide. Xaa is preferably Glu or Asp but may be other amino acids, including Leu, Met, His, Cys and Gln.. Probably plays an important role in intracellular peptide degradation. The polypeptide is Peptidase B (Cronobacter sakazakii (strain ATCC BAA-894) (Enterobacter sakazakii)).